Here is a 427-residue protein sequence, read N- to C-terminus: Enolase (427 aa).

(2R)-2-phosphoglycerate is bound at residue Q163. The active-site Proton donor is the E205. 3 residues coordinate Mg(2+): D242, E285, and D312. (2R)-2-phosphoglycerate-binding residues include K337, R366, S367, and K388. The active-site Proton acceptor is the K337.

The protein belongs to the enolase family. The cofactor is Mg(2+).

The protein localises to the cytoplasm. It localises to the secreted. It is found in the cell surface. The enzyme catalyses (2R)-2-phosphoglycerate = phosphoenolpyruvate + H2O. Its pathway is carbohydrate degradation; glycolysis; pyruvate from D-glyceraldehyde 3-phosphate: step 4/5. Catalyzes the reversible conversion of 2-phosphoglycerate (2-PG) into phosphoenolpyruvate (PEP). It is essential for the degradation of carbohydrates via glycolysis. This Ralstonia pickettii (strain 12J) protein is Enolase.